Consider the following 212-residue polypeptide: ATP-dependent Clp protease proteolytic subunit (212 aa).

S106 serves as the catalytic Nucleophile. Residue H131 is part of the active site.

It belongs to the peptidase S14 family. In terms of assembly, fourteen ClpP subunits assemble into 2 heptameric rings which stack back to back to give a disk-like structure with a central cavity, resembling the structure of eukaryotic proteasomes.

Its subcellular location is the cytoplasm. The catalysed reaction is Hydrolysis of proteins to small peptides in the presence of ATP and magnesium. alpha-casein is the usual test substrate. In the absence of ATP, only oligopeptides shorter than five residues are hydrolyzed (such as succinyl-Leu-Tyr-|-NHMec, and Leu-Tyr-Leu-|-Tyr-Trp, in which cleavage of the -Tyr-|-Leu- and -Tyr-|-Trp bonds also occurs).. Cleaves peptides in various proteins in a process that requires ATP hydrolysis. Has a chymotrypsin-like activity. Plays a major role in the degradation of misfolded proteins. The polypeptide is ATP-dependent Clp protease proteolytic subunit (Rhodopseudomonas palustris (strain HaA2)).